The chain runs to 275 residues: Lectin (275 aa).

Residues 1–30 (MASLQTQMISFYLIFLSILLTTIFFFKVNS) form the signal peptide. 2 residues coordinate D-glucose: aspartate 111 and glycine 129. Residues glutamate 149 and aspartate 151 each coordinate Mn(2+). Ca(2+) contacts are provided by aspartate 151, phenylalanine 153, asparagine 155, and aspartate 159. Positions 159 and 166 each coordinate Mn(2+). The propeptide occupies 211–217 (NSLEEEN). Residues glycine 246 and alanine 247 each contribute to the D-glucose site. The propeptide occupies 270–275 (KQAADA).

This sequence belongs to the leguminous lectin family. As to quaternary structure, heterotetramer of two alpha and two beta chains. Post-translationally, the mature form consists of two chains, alpha and beta, produced by cleavage of the immature protein. These remain cleaved, yet fold together to form one subunit.

In terms of biological role, D-mannose specific lectin. This Lens culinaris (Lentil) protein is Lectin.